A 267-amino-acid chain; its full sequence is Hydroxyethylthiazole kinase (267 aa).

A substrate-binding site is contributed by M44. The ATP site is built by K120 and T166. Residue G193 participates in substrate binding.

The protein belongs to the Thz kinase family. Mg(2+) serves as cofactor.

It catalyses the reaction 5-(2-hydroxyethyl)-4-methylthiazole + ATP = 4-methyl-5-(2-phosphooxyethyl)-thiazole + ADP + H(+). It functions in the pathway cofactor biosynthesis; thiamine diphosphate biosynthesis; 4-methyl-5-(2-phosphoethyl)-thiazole from 5-(2-hydroxyethyl)-4-methylthiazole: step 1/1. Catalyzes the phosphorylation of the hydroxyl group of 4-methyl-5-beta-hydroxyethylthiazole (THZ). In Desulfitobacterium hafniense (strain DSM 10664 / DCB-2), this protein is Hydroxyethylthiazole kinase.